The chain runs to 505 residues: ATP synthase subunit alpha (505 aa).

170–177 contributes to the ATP binding site; the sequence is GDRQTGKT.

The protein belongs to the ATPase alpha/beta chains family. As to quaternary structure, F-type ATPases have 2 components, CF(1) - the catalytic core - and CF(0) - the membrane proton channel. CF(1) has five subunits: alpha(3), beta(3), gamma(1), delta(1), epsilon(1). CF(0) has four main subunits: a(1), b(1), b'(1) and c(9-12).

It localises to the cellular thylakoid membrane. It carries out the reaction ATP + H2O + 4 H(+)(in) = ADP + phosphate + 5 H(+)(out). Produces ATP from ADP in the presence of a proton gradient across the membrane. The alpha chain is a regulatory subunit. This is ATP synthase subunit alpha from Synechococcus sp. (strain ATCC 27144 / PCC 6301 / SAUG 1402/1) (Anacystis nidulans).